A 337-amino-acid chain; its full sequence is Sideroflexin-4 (337 aa).

S2 is subject to N-acetylserine. A run of 3 helical transmembrane segments spans residues 111-131 (AAFL…LKGI), 133-153 (SVIL…SING), and 165-185 (SLLM…PQFV). K197 is modified (N6-acetyllysine). Helical transmembrane passes span 251–271 (ASRI…TYFF) and 293–313 (VLAM…IGQI).

This sequence belongs to the sideroflexin family.

The protein localises to the mitochondrion inner membrane. Its function is as follows. Mitochondrial amino-acid transporter. Does not act as a serine transporter: not able to mediate transport of serine into mitochondria. This is Sideroflexin-4 from Homo sapiens (Human).